A 482-amino-acid chain; its full sequence is Aspartyl/glutamyl-tRNA(Asn/Gln) amidotransferase subunit B (482 aa).

This sequence belongs to the GatB/GatE family. GatB subfamily. In terms of assembly, heterotrimer of A, B and C subunits.

The enzyme catalyses L-glutamyl-tRNA(Gln) + L-glutamine + ATP + H2O = L-glutaminyl-tRNA(Gln) + L-glutamate + ADP + phosphate + H(+). The catalysed reaction is L-aspartyl-tRNA(Asn) + L-glutamine + ATP + H2O = L-asparaginyl-tRNA(Asn) + L-glutamate + ADP + phosphate + 2 H(+). Functionally, allows the formation of correctly charged Asn-tRNA(Asn) or Gln-tRNA(Gln) through the transamidation of misacylated Asp-tRNA(Asn) or Glu-tRNA(Gln) in organisms which lack either or both of asparaginyl-tRNA or glutaminyl-tRNA synthetases. The reaction takes place in the presence of glutamine and ATP through an activated phospho-Asp-tRNA(Asn) or phospho-Glu-tRNA(Gln). The sequence is that of Aspartyl/glutamyl-tRNA(Asn/Gln) amidotransferase subunit B from Thermotoga sp. (strain RQ2).